The following is a 660-amino-acid chain: Acetyl-coenzyme A synthetase (660 aa).

CoA contacts are provided by residues 197–200 (RGGK) and threonine 317. Residues 397-399 (GEP), 421-426 (DTWWQT), aspartate 512, and arginine 528 contribute to the ATP site. Serine 536 serves as a coordination point for CoA. An ATP-binding site is contributed by arginine 539. The Mg(2+) site is built by valine 550, histidine 552, and valine 555. Residue lysine 625 is modified to N6-acetyllysine.

The protein belongs to the ATP-dependent AMP-binding enzyme family. Mg(2+) serves as cofactor. Post-translationally, acetylated. Deacetylation by the SIR2-homolog deacetylase activates the enzyme.

It catalyses the reaction acetate + ATP + CoA = acetyl-CoA + AMP + diphosphate. Functionally, catalyzes the conversion of acetate into acetyl-CoA (AcCoA), an essential intermediate at the junction of anabolic and catabolic pathways. AcsA undergoes a two-step reaction. In the first half reaction, AcsA combines acetate with ATP to form acetyl-adenylate (AcAMP) intermediate. In the second half reaction, it can then transfer the acetyl group from AcAMP to the sulfhydryl group of CoA, forming the product AcCoA. The sequence is that of Acetyl-coenzyme A synthetase from Burkholderia thailandensis (strain ATCC 700388 / DSM 13276 / CCUG 48851 / CIP 106301 / E264).